A 107-amino-acid polypeptide reads, in one-letter code: Essential MCU regulator, mitochondrial (107 aa).

A mitochondrion-targeting transit peptide spans 1-47 (MASTAARRLAWVAVRPGALWSGPRGRRGGDVYTVPGSSGLSQVPSRS). The Mitochondrial matrix segment spans residues 48–65 (VIVTRSGAILPKPVKMSF). A helical transmembrane segment spans residues 66 to 85 (GLLRVFSIVIPFLYVGTLIS). Residues 81–85 (GTLIS) carry the GXXXX[G/A/S] motif. Residues 86-107 (KNFAALLEEHDIFVPEDDDDDD) are Mitochondrial intermembrane-facing.

This sequence belongs to the SMDT1/EMRE family. Component of the uniplex complex, composed of MCU, EMRE/SMDT1, MICU1 and MICU2 (or MICU3) in a 4:4:1:1 stoichiometry. The number of EMRE/SMDT1 molecules is hovewer variable, ranging from 1 to 4 copies per uniplex complex, leading to uniplex complexes with distinct gatekeeping profiles. Interacts (via its C-terminal poly-Asp tail) with MCUR1; the interaction is direct. Unprocessed form interacts (via transit peptide) with MAIP1. Undergoes proteolytic degradation in neurons: degraded by AFG3L2 and SPG7 before SMDT1/EMRE assembly with the uniporter complex, limiting the availability of SMDT1/EMRE for MCU assembly and promoting efficient assembly of gatekeeper subunits with MCU. In terms of tissue distribution, widely expressed.

The protein localises to the mitochondrion inner membrane. In terms of biological role, essential regulatory subunit of the mitochondrial calcium uniporter complex (uniplex), a complex that mediates calcium uptake into mitochondria. Required to bridge the calcium-sensing proteins MICU1 with the calcium-conducting subunit MCU. Acts by mediating activation of MCU and retention of MICU1 to the MCU pore, in order to ensure tight regulation of the uniplex complex and appropriate responses to intracellular calcium signaling. The protein is Essential MCU regulator, mitochondrial of Mus musculus (Mouse).